Here is a 506-residue protein sequence, read N- to C-terminus: Arabinose import ATP-binding protein AraG (506 aa).

ABC transporter domains lie at 10–245 (LEFC…MVGR) and 253–501 (YRSR…MLGN). Residue 42 to 49 (GENGAGKS) participates in ATP binding.

The protein belongs to the ABC transporter superfamily. Arabinose importer (TC 3.A.1.2.2) family. In terms of assembly, the complex is composed of two ATP-binding proteins (AraG), two transmembrane proteins (AraH) and a solute-binding protein (AraF).

The protein resides in the cell inner membrane. The enzyme catalyses L-arabinose(out) + ATP + H2O = L-arabinose(in) + ADP + phosphate + H(+). Part of the ABC transporter complex AraFGH involved in arabinose import. Responsible for energy coupling to the transport system. The chain is Arabinose import ATP-binding protein AraG from Vibrio parahaemolyticus serotype O3:K6 (strain RIMD 2210633).